The following is a 452-amino-acid chain: tRNA modification GTPase MnmE (452 aa).

Positions 21, 78, and 118 each coordinate (6S)-5-formyl-5,6,7,8-tetrahydrofolate. The TrmE-type G domain maps to 214 to 375; sequence GMKVVIAGRP…LREHLKKSMG (162 aa). Residue N224 participates in K(+) binding. GTP is bound by residues 224–229, 243–249, and 268–271; these read NAGKSS, TNIAGTT, and DTAG. S228 lines the Mg(2+) pocket. The K(+) site is built by T243, I245, and T248. Position 249 (T249) interacts with Mg(2+). K452 provides a ligand contact to (6S)-5-formyl-5,6,7,8-tetrahydrofolate.

It belongs to the TRAFAC class TrmE-Era-EngA-EngB-Septin-like GTPase superfamily. TrmE GTPase family. As to quaternary structure, homodimer. Heterotetramer of two MnmE and two MnmG subunits. K(+) serves as cofactor.

It is found in the cytoplasm. Functionally, exhibits a very high intrinsic GTPase hydrolysis rate. Involved in the addition of a carboxymethylaminomethyl (cmnm) group at the wobble position (U34) of certain tRNAs, forming tRNA-cmnm(5)s(2)U34. The sequence is that of tRNA modification GTPase MnmE from Actinobacillus pleuropneumoniae serotype 5b (strain L20).